Reading from the N-terminus, the 118-residue chain is Large ribosomal subunit protein uL18 (118 aa).

The segment at 1–24 (MISKPDKNKIRQKRHRRVRGKLSG) is disordered. Over residues 10–20 (IRQKRHRRVRG) the composition is skewed to basic residues.

It belongs to the universal ribosomal protein uL18 family. In terms of assembly, part of the 50S ribosomal subunit; part of the 5S rRNA/L5/L18/L25 subcomplex. Contacts the 5S and 23S rRNAs.

Functionally, this is one of the proteins that bind and probably mediate the attachment of the 5S RNA into the large ribosomal subunit, where it forms part of the central protuberance. The chain is Large ribosomal subunit protein uL18 from Streptococcus agalactiae serotype III (strain NEM316).